The following is a 336-amino-acid chain: Cytosolic 5'-nucleotidase 3A (336 aa).

Aspartate 88 serves as the catalytic Nucleophile. Mg(2+) contacts are provided by aspartate 88 and aspartate 90. Aspartate 90 functions as the Proton donor in the catalytic mechanism. Glutamate 135 contacts CMP. Residues glutamate 135 and serine 156 each coordinate N(7)-methyl-GMP. Substrate-binding positions include 203 to 204 (SA) and lysine 252. Aspartate 277 contacts Mg(2+). Serine 278 bears the Phosphoserine mark.

Belongs to the pyrimidine 5'-nucleotidase family. As to quaternary structure, monomer. Isoforms 1, 3 and 4 are expressed in reticulocytes. Isoform 4 is hardly detectable in bone marrow and fetal liver.

It is found in the cytoplasm. Its subcellular location is the endoplasmic reticulum. It catalyses the reaction N(7)-methyl-GMP + H2O = N(7)-methylguanosine + phosphate. The enzyme catalyses CMP + H2O = cytidine + phosphate. It carries out the reaction a ribonucleoside 5'-phosphate + H2O = a ribonucleoside + phosphate. Functionally, nucleotidase which shows specific activity towards cytidine monophosphate (CMP) and 7-methylguanosine monophosphate (m(7)GMP). CMP seems to be the preferred substrate. The sequence is that of Cytosolic 5'-nucleotidase 3A (NT5C3A) from Homo sapiens (Human).